Here is a 652-residue protein sequence, read N- to C-terminus: ATP-dependent zinc metalloprotease FtsH (652 aa).

The Cytoplasmic segment spans residues 1-11 (MKKQNNGLIKN). Residues 12–32 (PFLWLLFIFFLVTGFQYFYSG) traverse the membrane as a helical segment. Over 33–131 (NNSGGSQQIN…EVTVKHESSS (99 aa)) the chain is Extracellular. Residues 132-152 (GIWINLLVSIVPFGILFFFLF) form a helical membrane-spanning segment. Over 153–652 (SMMGNMGGGN…EVKSKMNDEK (500 aa)) the chain is Cytoplasmic. Residue 227–234 (GPPGTGKT) participates in ATP binding. H449 serves as a coordination point for Zn(2+). E450 is an active-site residue. Zn(2+)-binding residues include H453 and D525. Residues 628–652 (MPEAVEEESHALSYDEVKSKMNDEK) are disordered. The segment covering 634 to 652 (EESHALSYDEVKSKMNDEK) has biased composition (basic and acidic residues).

This sequence in the central section; belongs to the AAA ATPase family. It in the C-terminal section; belongs to the peptidase M41 family. As to quaternary structure, homohexamer. Zn(2+) serves as cofactor.

It is found in the cell membrane. Acts as a processive, ATP-dependent zinc metallopeptidase for both cytoplasmic and membrane proteins. Plays a role in the quality control of integral membrane proteins. The chain is ATP-dependent zinc metalloprotease FtsH from Streptococcus pneumoniae (strain ATCC BAA-255 / R6).